Here is a 185-residue protein sequence, read N- to C-terminus: A-type ATP synthase subunit E (185 aa).

The protein belongs to the V-ATPase E subunit family. As to quaternary structure, has multiple subunits with at least A(3), B(3), C, D, E, F, H, I and proteolipid K(x).

It localises to the cell membrane. Functionally, component of the A-type ATP synthase that produces ATP from ADP in the presence of a proton gradient across the membrane. The protein is A-type ATP synthase subunit E of Thermoplasma acidophilum (strain ATCC 25905 / DSM 1728 / JCM 9062 / NBRC 15155 / AMRC-C165).